A 367-amino-acid polypeptide reads, in one-letter code: MSGSQTLVVKLGTSVLTGGSRRLNRAHIVELVRQCAQQHAKGHRIVIVTSGAIAAGREHLGYPELPATIASKQLLAAVGQSRLIQLWEQLFSIYGIHIGQMLLTRADLEDRERFLNARDTMNALLDNRIVPVINENDAVATAEIKVGDNDNLSALAAILASADKLLLLTDQAGLYTADPRNNPEAELIREVHGIDDVLRGMAGDSVSGLGTGGMATKLQAADVACRAGIDVVIAAGSQVGVIADVIDGTPVGTRFHSLETPLENRKRWIFGAPPAGEITVDDGAVFAIMERGSSLLPKGIRSVKGDFSRGEVIRIRNLNGRDLAHGVSRYNSDALRMLAGHHSQQISEILGYEYGPVAVHRDDMIVS.

Residue Lys10 participates in ATP binding. Positions 50, 137, and 149 each coordinate substrate. ATP contacts are provided by residues 169–170 (TD) and 211–217 (TGGMATK). Residues 275-353 (AGEITVDDGA…QQISEILGYE (79 aa)) form the PUA domain.

Belongs to the glutamate 5-kinase family.

Its subcellular location is the cytoplasm. It catalyses the reaction L-glutamate + ATP = L-glutamyl 5-phosphate + ADP. It functions in the pathway amino-acid biosynthesis; L-proline biosynthesis; L-glutamate 5-semialdehyde from L-glutamate: step 1/2. Catalyzes the transfer of a phosphate group to glutamate to form L-glutamate 5-phosphate. The chain is Glutamate 5-kinase from Yersinia pseudotuberculosis serotype IB (strain PB1/+).